A 104-amino-acid chain; its full sequence is Large ribosomal subunit protein uL24 (104 aa).

Belongs to the universal ribosomal protein uL24 family. Part of the 50S ribosomal subunit.

In terms of biological role, one of two assembly initiator proteins, it binds directly to the 5'-end of the 23S rRNA, where it nucleates assembly of the 50S subunit. Its function is as follows. One of the proteins that surrounds the polypeptide exit tunnel on the outside of the subunit. This is Large ribosomal subunit protein uL24 from Corynebacterium kroppenstedtii (strain DSM 44385 / JCM 11950 / CIP 105744 / CCUG 35717).